Consider the following 445-residue polypeptide: Phosphoglucosamine mutase (445 aa).

The active-site Phosphoserine intermediate is Ser-102. Residues Ser-102, Asp-241, Asp-243, and Asp-245 each coordinate Mg(2+). Ser-102 carries the post-translational modification Phosphoserine.

The protein belongs to the phosphohexose mutase family. Mg(2+) serves as cofactor. Post-translationally, activated by phosphorylation.

It carries out the reaction alpha-D-glucosamine 1-phosphate = D-glucosamine 6-phosphate. In terms of biological role, catalyzes the conversion of glucosamine-6-phosphate to glucosamine-1-phosphate. This is Phosphoglucosamine mutase from Shewanella piezotolerans (strain WP3 / JCM 13877).